We begin with the raw amino-acid sequence, 274 residues long: Thiamine kinase (274 aa).

The protein belongs to the thiamine kinase family.

It carries out the reaction thiamine + ATP = thiamine phosphate + ADP + H(+). It participates in cofactor biosynthesis; thiamine diphosphate biosynthesis; thiamine phosphate from thiamine: step 1/1. Functionally, catalyzes the ATP-dependent phosphorylation of thiamine to thiamine phosphate. Is involved in thiamine salvage. This Shigella sonnei (strain Ss046) protein is Thiamine kinase.